A 137-amino-acid polypeptide reads, in one-letter code: Acidic phospholipase A2 PL-I (137 aa).

An N-terminal signal peptide occupies residues 1–17 (AVCVSLLGASSIRPLPL). Disulfide bonds link Cys28/Cys89, Cys44/Cys136, Cys46/Cys62, Cys61/Cys117, Cys68/Cys110, Cys78/Cys103, and Cys96/Cys108. Residues Tyr45, Gly47, and Gly49 each coordinate Ca(2+). Residue His65 is part of the active site. Asp66 provides a ligand contact to Ca(2+). Asp111 is an active-site residue.

It depends on Ca(2+) as a cofactor. As to expression, expressed by the venom gland.

The protein resides in the secreted. It catalyses the reaction a 1,2-diacyl-sn-glycero-3-phosphocholine + H2O = a 1-acyl-sn-glycero-3-phosphocholine + a fatty acid + H(+). Functionally, snake venom phospholipase A2 (PLA2) that may act in the hemostasis system of the prey. Exhibits hydrolytic activities, and prefers the anionic micelles (dPPC with deoxycholate) (793 umol/mg/min) to the zwitterionic micelles (dPPC with Triton X-100) (591 umol/mg/min). PLA2 catalyzes the calcium-dependent hydrolysis of the 2-acyl groups in 3-sn-phosphoglycerides. The polypeptide is Acidic phospholipase A2 PL-I (Walterinnesia aegyptia (Desert black snake)).